We begin with the raw amino-acid sequence, 206 residues long: Pyridoxal 5'-phosphate synthase subunit PdxT (206 aa).

Residue 59–61 (GES) coordinates L-glutamine. C91 acts as the Nucleophile in catalysis. L-glutamine is bound by residues R123 and 151-152 (IR). Catalysis depends on charge relay system residues H187 and E189.

The protein belongs to the glutaminase PdxT/SNO family. In the presence of PdxS, forms a dodecamer of heterodimers. Only shows activity in the heterodimer.

It catalyses the reaction aldehydo-D-ribose 5-phosphate + D-glyceraldehyde 3-phosphate + L-glutamine = pyridoxal 5'-phosphate + L-glutamate + phosphate + 3 H2O + H(+). The enzyme catalyses L-glutamine + H2O = L-glutamate + NH4(+). It participates in cofactor biosynthesis; pyridoxal 5'-phosphate biosynthesis. In terms of biological role, catalyzes the hydrolysis of glutamine to glutamate and ammonia as part of the biosynthesis of pyridoxal 5'-phosphate. The resulting ammonia molecule is channeled to the active site of PdxS. The protein is Pyridoxal 5'-phosphate synthase subunit PdxT of Mycobacterium sp. (strain KMS).